Reading from the N-terminus, the 464-residue chain is MAAAFSSTVGAPASTPTNFLGKKLKKQVTSAVNYHGKSSKANRFTVMAAENIDEKRNTDKWKGLAYDISDDQQDITRGKGIVDSLFQAPTGHGTHEAVLSSYEYVSQGLRKYDFDNTMGGFYIAPAFMDKLVVHLSKNFMTLPNIKIPLILGIWGGKGQGKSFQCELVFAKMGINPIMMSAGELESGNAGEPAKLIRQRYREAADMIKKGKMCCLFINDLDAGAGRMGGTTQYTVNNQMVNATLMNIADAPTNVQLPGMYNKRENPRVPIVVTGNDFSTLYAPLIRDGRMEKFYWAPTRDDRIGVCKGIFQTDNVSDESVVKIVDTFPGQSIDFFGALRARVYDDEVRKWVGSTGIENIGKRLVNSRDGPVTFEQPKMTVEKLLEYGHMLVQEQDNVKRVQLADTYMSQAALGDANQDAMKTGSFYGKGAQQGTLPVPEGCTDQNAKNYDPTARSDDGSCLYTF.

Residues 1 to 48 (MAAAFSSTVGAPASTPTNFLGKKLKKQVTSAVNYHGKSSKANRFTVMA) constitute a chloroplast transit peptide. Residue 155 to 162 (GGKGQGKS) participates in ATP binding.

The protein belongs to the RuBisCO activase family.

It localises to the plastid. Its subcellular location is the chloroplast stroma. In terms of biological role, activation of RuBisCO (ribulose-1,5-bisphosphate carboxylase/oxygenase; EC 4.1.1.39) involves the ATP-dependent carboxylation of the epsilon-amino group of lysine leading to a carbamate structure. In Hordeum vulgare (Barley), this protein is Ribulose bisphosphate carboxylase/oxygenase activase A, chloroplastic (RCAA).